Consider the following 249-residue polypeptide: Globin-like protein 9 (249 aa).

The interval 20–43 (TNKGPNGLARRGTQRGCSRSKSTR) is disordered. In terms of domain architecture, Globin spans 52–205 (SLTFSQKQAL…LIDELRGGFE (154 aa)). His116 and His148 together coordinate heme.

This sequence belongs to the globin family.

In Caenorhabditis elegans, this protein is Globin-like protein 9 (glb-9).